A 488-amino-acid chain; its full sequence is Zinc finger protein 92 (488 aa).

A KRAB domain is found at 14 to 85 (VSFEDVSVYF…DDGMESAARS (72 aa)). 6 C2H2-type zinc fingers span residues 141 to 163 (YLCQ…RIIH), 169 to 191 (YECS…QRIH), 197 to 219 (YECG…QVIH), 225 to 247 (FVCR…TRIH), 253 to 275 (FECT…QRIH), and 281 to 303 (YICK…QLIH). The C2H2-type 7; degenerate zinc finger occupies 309 to 331 (FTCHEYGKAFRGLSGLSQHQRVH). The C2H2-type 8 zinc-finger motif lies at 337-359 (YECSECGRAFGRRANLFKHQVVH). The disordered stretch occupies residues 387–408 (QQPQEAGEGSSAEPQPIDTNEK). The C2H2-type 9 zinc finger occupies 410–432 (QVCERCGQVFENKLLLCRHLRIH). The disordered stretch occupies residues 435–488 (EDDKKQKPVISSTSVLEDKSLLSQHLEAQPTEESDSEGSVVFVYAEKPHGPSSP).

This sequence belongs to the krueppel C2H2-type zinc-finger protein family. As to expression, highly expressed in pancreatic islets.

It localises to the nucleus. KRAB domain-containing zinc-finger protein that represses B1/Alu SINE transposable elements and modulates the transcription of nearby genes in a tissue-specific manner. It regulates glucose homeostasis and lipid metabolism by modulating the expression of the endocrine cell-defining transcription factor, MAFB, in pancreatic islets and, the fat metabolism regulator, ACACB, in adipose tissue and muscle. This Mus musculus (Mouse) protein is Zinc finger protein 92 (Zfp92).